We begin with the raw amino-acid sequence, 51 residues long: Large ribosomal subunit protein eL39 (51 aa).

Belongs to the eukaryotic ribosomal protein eL39 family. As to quaternary structure, interacts with YIH1.

This Kluyveromyces lactis (strain ATCC 8585 / CBS 2359 / DSM 70799 / NBRC 1267 / NRRL Y-1140 / WM37) (Yeast) protein is Large ribosomal subunit protein eL39 (RPL39).